A 370-amino-acid polypeptide reads, in one-letter code: Anhydro-N-acetylmuramic acid kinase (370 aa).

13–20 (GTSMDGVD) serves as a coordination point for ATP.

The protein belongs to the anhydro-N-acetylmuramic acid kinase family.

The enzyme catalyses 1,6-anhydro-N-acetyl-beta-muramate + ATP + H2O = N-acetyl-D-muramate 6-phosphate + ADP + H(+). Its pathway is amino-sugar metabolism; 1,6-anhydro-N-acetylmuramate degradation. The protein operates within cell wall biogenesis; peptidoglycan recycling. Its function is as follows. Catalyzes the specific phosphorylation of 1,6-anhydro-N-acetylmuramic acid (anhMurNAc) with the simultaneous cleavage of the 1,6-anhydro ring, generating MurNAc-6-P. Is required for the utilization of anhMurNAc either imported from the medium or derived from its own cell wall murein, and thus plays a role in cell wall recycling. The sequence is that of Anhydro-N-acetylmuramic acid kinase from Vibrio parahaemolyticus serotype O3:K6 (strain RIMD 2210633).